The sequence spans 107 residues: Large ribosomal subunit protein uL24 (107 aa).

This sequence belongs to the universal ribosomal protein uL24 family. As to quaternary structure, part of the 50S ribosomal subunit.

Its function is as follows. One of two assembly initiator proteins, it binds directly to the 5'-end of the 23S rRNA, where it nucleates assembly of the 50S subunit. One of the proteins that surrounds the polypeptide exit tunnel on the outside of the subunit. The chain is Large ribosomal subunit protein uL24 from Mesomycoplasma hyopneumoniae (strain 7448) (Mycoplasma hyopneumoniae).